A 112-amino-acid chain; its full sequence is Nitrogen regulatory protein P-II (112 aa).

Tyr-51 carries the O-UMP-tyrosine modification.

The protein belongs to the P(II) protein family. In terms of assembly, homotrimer.

The protein resides in the plastid. The protein localises to the chloroplast. Its function is as follows. P-II indirectly controls the transcription of the glutamine synthetase gene (glnA). P-II prevents NR-II-catalyzed conversion of NR-I to NR-I-phosphate, the transcriptional activator of glnA. When P-II is uridylylated to P-II-UMP, these events are reversed. When the ratio of Gln to 2-ketoglutarate decreases, P-II is uridylylated to P-II-UMP, which causes the deadenylation of glutamine synthetase, so activating the enzyme. The protein is Nitrogen regulatory protein P-II (glnB) of Porphyra purpurea (Red seaweed).